The sequence spans 83 residues: Large ribosomal subunit protein eL43 (83 aa).

Positions 38, 41, 56, and 59 each coordinate Zn(2+). The segment at 38 to 59 (CPVCGRRAVRRISTGIWQCKKC) adopts a C4-type zinc-finger fold.

The protein belongs to the eukaryotic ribosomal protein eL43 family. Putative zinc-binding subfamily. As to quaternary structure, part of the 50S ribosomal subunit. Zn(2+) serves as cofactor.

Functionally, binds to the 23S rRNA. The protein is Large ribosomal subunit protein eL43 of Pyrococcus abyssi (strain GE5 / Orsay).